Here is a 302-residue protein sequence, read N- to C-terminus: uncharacterized protein (302 aa).

Residues 13–89 (QTLFKFLKKT…VNLDIVYEDN (77 aa)) enclose the S4 RNA-binding domain. Residue Asp-141 is part of the active site.

Belongs to the pseudouridine synthase RluA family.

The catalysed reaction is a uridine in RNA = a pseudouridine in RNA. This is an uncharacterized protein from Mycoplasma capricolum subsp. capricolum (strain California kid / ATCC 27343 / NCTC 10154).